A 459-amino-acid chain; its full sequence is Nuclear distribution protein nudF 1 (459 aa).

One can recognise a LisH domain in the interval 9–41; sequence QAEELHKSIIAYLSANNLSNAASALRGELGLSE. Residues 61–88 are a coiled coil; the sequence is TSIVRLQKKIMDLEARCGALQTELNNAT. 8 WD repeats span residues 114–155, 157–197, 201–240, 243–282, 288–349, 351–390, 395–440, and 442–459; these read SHRN…TTLK, HTRA…KNIR, GHEH…CVKT, GHSG…NPEA, GHDH…LMTL, GHDN…KCVK, AHGR…PQVQ, and RCVV…IFAN.

It belongs to the WD repeat LIS1/nudF family. In terms of assembly, self-associates. Interacts with nudE and dynein.

Its subcellular location is the cytoplasm. The protein localises to the cytoskeleton. It is found in the spindle pole. Functionally, positively regulates the activity of the minus-end directed microtubule motor protein dynein. May enhance dynein-mediated microtubule sliding by targeting dynein to the microtubule plus end. Required for nuclear migration during vegetative growth as well as development. Required for retrograde early endosome (EE) transport from the hyphal tip. Required for localization of dynein to the mitotic spindle poles. Recruits additional proteins to the dynein complex at SPBs. The sequence is that of Nuclear distribution protein nudF 1 from Talaromyces marneffei (strain ATCC 18224 / CBS 334.59 / QM 7333) (Penicillium marneffei).